The sequence spans 386 residues: 3-ketoacyl-CoA thiolase (386 aa).

The active-site Acyl-thioester intermediate is cysteine 91. Catalysis depends on proton acceptor residues histidine 342 and cysteine 372.

Belongs to the thiolase-like superfamily. Thiolase family. In terms of assembly, heterotetramer of two alpha chains (FadB) and two beta chains (FadA).

The protein localises to the cytoplasm. It catalyses the reaction an acyl-CoA + acetyl-CoA = a 3-oxoacyl-CoA + CoA. The protein operates within lipid metabolism; fatty acid beta-oxidation. Catalyzes the final step of fatty acid oxidation in which acetyl-CoA is released and the CoA ester of a fatty acid two carbons shorter is formed. The chain is 3-ketoacyl-CoA thiolase from Colwellia psychrerythraea (strain 34H / ATCC BAA-681) (Vibrio psychroerythus).